A 145-amino-acid polypeptide reads, in one-letter code: Basic phospholipase A2 PC17 (145 aa).

An N-terminal signal peptide occupies residues 1-21; it reads MYPAHLLLLLAVCVSLLGASA. Residues 22–27 constitute a propeptide that is removed on maturation; it reads IPPLPL. Intrachain disulfides connect Cys-38–Cys-98, Cys-54–Cys-144, Cys-56–Cys-72, Cys-71–Cys-125, Cys-78–Cys-118, Cys-87–Cys-111, and Cys-105–Cys-116. The Ca(2+) site is built by Tyr-55, Gly-57, and Gly-59. His-75 is a catalytic residue. Asp-76 provides a ligand contact to Ca(2+). Asp-119 is a catalytic residue.

It belongs to the phospholipase A2 family. Group I subfamily. D49 sub-subfamily. Ca(2+) serves as cofactor.

It localises to the secreted. It catalyses the reaction a 1,2-diacyl-sn-glycero-3-phosphocholine + H2O = a 1-acyl-sn-glycero-3-phosphocholine + a fatty acid + H(+). Functionally, PLA2 catalyzes the calcium-dependent hydrolysis of the 2-acyl groups in 3-sn-phosphoglycerides. The chain is Basic phospholipase A2 PC17 from Laticauda laticaudata (Blue-ringed sea krait).